Reading from the N-terminus, the 408-residue chain is Arginine biosynthesis bifunctional protein ArgJ (408 aa).

6 residues coordinate substrate: Thr-156, Lys-182, Thr-193, Glu-279, Asn-403, and Ser-408. Thr-193 acts as the Nucleophile in catalysis.

Belongs to the ArgJ family. In terms of assembly, heterotetramer of two alpha and two beta chains.

It localises to the cytoplasm. The enzyme catalyses N(2)-acetyl-L-ornithine + L-glutamate = N-acetyl-L-glutamate + L-ornithine. The catalysed reaction is L-glutamate + acetyl-CoA = N-acetyl-L-glutamate + CoA + H(+). It participates in amino-acid biosynthesis; L-arginine biosynthesis; L-ornithine and N-acetyl-L-glutamate from L-glutamate and N(2)-acetyl-L-ornithine (cyclic): step 1/1. It functions in the pathway amino-acid biosynthesis; L-arginine biosynthesis; N(2)-acetyl-L-ornithine from L-glutamate: step 1/4. Functionally, catalyzes two activities which are involved in the cyclic version of arginine biosynthesis: the synthesis of N-acetylglutamate from glutamate and acetyl-CoA as the acetyl donor, and of ornithine by transacetylation between N(2)-acetylornithine and glutamate. The chain is Arginine biosynthesis bifunctional protein ArgJ from Bordetella bronchiseptica (strain ATCC BAA-588 / NCTC 13252 / RB50) (Alcaligenes bronchisepticus).